The chain runs to 440 residues: Transposon Ty1-OL Gag polyprotein (440 aa).

Composition is skewed to polar residues over residues M1–S23, T48–S60, and Q127–F152. 3 disordered regions span residues M1–Q93, P126–P173, and G352–Y440. Positions T153 to T165 are enriched in low complexity. The RNA-binding stretch occupies residues N299–H401. Low complexity predominate over residues N402–S418. Residue S416 is modified to Phosphoserine. A compositionally biased stretch (polar residues) spans K419–N428. Residues N429 to Y440 are compositionally biased toward basic and acidic residues.

As to quaternary structure, homotrimer.

It is found in the cytoplasm. Capsid protein (CA) is the structural component of the virus-like particle (VLP), forming the shell that encapsulates the retrotransposons dimeric RNA genome. The particles are assembled from trimer-clustered units and there are holes in the capsid shells that allow for the diffusion of macromolecules. CA also has nucleocapsid-like chaperone activity, promoting primer tRNA(i)-Met annealing to the multipartite primer-binding site (PBS), dimerization of Ty1 RNA and initiation of reverse transcription. The protein is Transposon Ty1-OL Gag polyprotein (TY1A-OL) of Saccharomyces cerevisiae (strain ATCC 204508 / S288c) (Baker's yeast).